Here is a 536-residue protein sequence, read N- to C-terminus: REST corepressor 2 (536 aa).

Residues 1–44 are disordered; that stretch reads MERSGSGVLSRSRAKTVTNGNSQHSEEESSDEEHPNDSMIRVGG. The segment covering 24-36 has biased composition (basic and acidic residues); it reads HSEEESSDEEHPN. The ELM2 domain occupies 38-123; that stretch reads SMIRVGGDYQ…KSLADLANFT (86 aa). Positions 124–175 constitute an SANT 1 domain; it reads PFPDEWTVEDKVLFEQAFSFHGKSFHRIQQMLPDKMITSLVKYYYSWKKTRT. Positions 179 to 264 are disordered; it reads VMDRQARKLL…RARRRPPKGM (86 aa). Over residues 197–211 the composition is skewed to acidic residues; sequence NDEIEEGDPGSDSDF. A compositionally biased stretch (basic residues) spans 249-262; it reads YRHHPLRARRRPPK. Residues 283–315 are a coiled coil; that stretch reads VTIRQLDTQLVSLKRQVQKIKQTNSVLRNNLGD. The 52-residue stretch at 328 to 379 folds into the SANT 2 domain; it reads KINSRWTTEEQLLAVQAVRRYGKDFAAIADVIGNKTVAQVSSFFVSYRRRFN. The interval 389-536 is disordered; it reads AEQEVQGSSG…GLKVESPQSH (148 aa). A compositionally biased stretch (polar residues) spans 391–406; sequence QEVQGSSGRTVNTELN. Residues 422–449 are compositionally biased toward low complexity; sequence SPPHSDSPLPSSEGSASGNHSSAQSSPP. Residues 450–476 show a composition bias toward pro residues; that stretch reads LTQPPPLLRPAPPSAPPSLLRQPPPLQ.

The protein belongs to the CoREST family.

It localises to the nucleus. Its function is as follows. May act as a component of a corepressor complex that represses transcription. This Danio rerio (Zebrafish) protein is REST corepressor 2 (rcor2).